A 616-amino-acid polypeptide reads, in one-letter code: Dihydroxy-acid dehydratase (616 aa).

A Mg(2+)-binding site is contributed by aspartate 81. Cysteine 122 provides a ligand contact to [2Fe-2S] cluster. Positions 123 and 124 each coordinate Mg(2+). Lysine 124 is subject to N6-carboxylysine. Position 195 (cysteine 195) interacts with [2Fe-2S] cluster. Glutamate 491 is a binding site for Mg(2+). Serine 517 functions as the Proton acceptor in the catalytic mechanism.

The protein belongs to the IlvD/Edd family. Homodimer. [2Fe-2S] cluster serves as cofactor. Requires Mg(2+) as cofactor.

The catalysed reaction is (2R)-2,3-dihydroxy-3-methylbutanoate = 3-methyl-2-oxobutanoate + H2O. It catalyses the reaction (2R,3R)-2,3-dihydroxy-3-methylpentanoate = (S)-3-methyl-2-oxopentanoate + H2O. The protein operates within amino-acid biosynthesis; L-isoleucine biosynthesis; L-isoleucine from 2-oxobutanoate: step 3/4. Its pathway is amino-acid biosynthesis; L-valine biosynthesis; L-valine from pyruvate: step 3/4. Its function is as follows. Functions in the biosynthesis of branched-chain amino acids. Catalyzes the dehydration of (2R,3R)-2,3-dihydroxy-3-methylpentanoate (2,3-dihydroxy-3-methylvalerate) into 2-oxo-3-methylpentanoate (2-oxo-3-methylvalerate) and of (2R)-2,3-dihydroxy-3-methylbutanoate (2,3-dihydroxyisovalerate) into 2-oxo-3-methylbutanoate (2-oxoisovalerate), the penultimate precursor to L-isoleucine and L-valine, respectively. This Yersinia pseudotuberculosis serotype O:1b (strain IP 31758) protein is Dihydroxy-acid dehydratase.